Here is a 528-residue protein sequence, read N- to C-terminus: Probable rhamnogalacturonate lyase A (528 aa).

Positions 1-20 (MLSKATLLLSLPFWARVANA) are cleaved as a signal peptide. N46 is a glycosylation site (N-linked (GlcNAc...) asparagine). Cystine bridges form between C50/C93 and C184/C193. N351 carries N-linked (GlcNAc...) asparagine glycosylation.

Belongs to the polysaccharide lyase 4 family.

It localises to the secreted. The catalysed reaction is Endotype eliminative cleavage of L-alpha-rhamnopyranosyl-(1-&gt;4)-alpha-D-galactopyranosyluronic acid bonds of rhamnogalacturonan I domains in ramified hairy regions of pectin leaving L-rhamnopyranose at the reducing end and 4-deoxy-4,5-unsaturated D-galactopyranosyluronic acid at the non-reducing end.. Pectinolytic enzymes consist of four classes of enzymes: pectin lyase, polygalacturonase, pectin methylesterase and rhamnogalacturonase. Degrades the rhamnogalacturonan I (RG-I) backbone of pectin. The protein is Probable rhamnogalacturonate lyase A (rglA) of Neosartorya fischeri (strain ATCC 1020 / DSM 3700 / CBS 544.65 / FGSC A1164 / JCM 1740 / NRRL 181 / WB 181) (Aspergillus fischerianus).